Reading from the N-terminus, the 749-residue chain is Protein O-mannosyl-transferase 2 (749 aa).

Residues 1 to 30 (MAASVVKTPKCPRRGSAKEQQSKASPKSNN) form a disordered region. Residues 34–54 (NWHWWILLASVFLITFATRFY) traverse the membrane as a helical segment. Residues N78, N104, and N117 are each glycosylated (N-linked (GlcNAc...) asparagine). The next 5 helical transmembrane spans lie at 126-146 (YFCT…VYDL), 173-193 (ILLD…MVKI), 204-224 (SVRW…TISV), 226-246 (FVGL…LWLI), and 266-286 (IALI…HLSV). 2 N-linked (GlcNAc...) asparagine glycosylation sites follow: N288 and N312. MIR domains follow at residues 316-372 (PRDV…IKPH), 382-438 (LQLL…VLIV), and 443-499 (NETV…VEDN). A glycan (N-linked (GlcNAc...) asparagine) is linked at N443. 4 helical membrane-spanning segments follow: residues 572–592 (IWWS…GNAI), 645–665 (LGAA…FWAM), 669–689 (LYFH…GVMF), and 703–723 (VLLG…SPLA). N735 carries an N-linked (GlcNAc...) asparagine glycan.

Belongs to the glycosyltransferase 39 family. In terms of assembly, interacts with Rt/POMT1.

It is found in the endoplasmic reticulum membrane. It catalyses the reaction a di-trans,poly-cis-dolichyl beta-D-mannosyl phosphate + L-seryl-[protein] = 3-O-(alpha-D-mannosyl)-L-seryl-[protein] + a di-trans,poly-cis-dolichyl phosphate + H(+). It carries out the reaction a di-trans,poly-cis-dolichyl beta-D-mannosyl phosphate + L-threonyl-[protein] = 3-O-(alpha-D-mannosyl)-L-threonyl-[protein] + a di-trans,poly-cis-dolichyl phosphate + H(+). It participates in protein modification; protein glycosylation. Functionally, rt/POMT1 and tw/POMT2 function as a protein O-mannosyltransferase in association with each other to generate and maintain normal muscle development. This Drosophila pseudoobscura pseudoobscura (Fruit fly) protein is Protein O-mannosyl-transferase 2.